A 295-amino-acid chain; its full sequence is Bifunctional protein FolD (295 aa).

NADP(+) contacts are provided by residues 177–179 (GRS) and serine 202.

This sequence belongs to the tetrahydrofolate dehydrogenase/cyclohydrolase family. As to quaternary structure, homodimer.

It carries out the reaction (6R)-5,10-methylene-5,6,7,8-tetrahydrofolate + NADP(+) = (6R)-5,10-methenyltetrahydrofolate + NADPH. The enzyme catalyses (6R)-5,10-methenyltetrahydrofolate + H2O = (6R)-10-formyltetrahydrofolate + H(+). The protein operates within one-carbon metabolism; tetrahydrofolate interconversion. In terms of biological role, catalyzes the oxidation of 5,10-methylenetetrahydrofolate to 5,10-methenyltetrahydrofolate and then the hydrolysis of 5,10-methenyltetrahydrofolate to 10-formyltetrahydrofolate. This Psychrobacter arcticus (strain DSM 17307 / VKM B-2377 / 273-4) protein is Bifunctional protein FolD.